Consider the following 369-residue polypeptide: Probable N-acetyltransferase 16 (369 aa).

Residues 1-49 (MKLEASCGTATSEVPKPEKKTARDAEPSSETRPQEVEAEPRSGSGPEAE) form a disordered region. Residues 15–26 (PKPEKKTARDAE) show a composition bias toward basic and acidic residues. An N-acetyltransferase domain is found at 53–188 (LDFVVATERE…QGILLVRFNA (136 aa)).

In terms of biological role, probable N-acetyltransferase. Shows only trace activity toward L-His and no N-acetyltransferase activity toward other amino acids. The physiological substrate of this enzyme is unknown. This is Probable N-acetyltransferase 16 (NAT16) from Homo sapiens (Human).